Reading from the N-terminus, the 388-residue chain is MSEQIVTPESSTPVVLNNETKINLLDLNRQQMREFFKNLGEKPFRADQVMKWMYHYCCDNFDEMTDINKVLRGKLKEVAEIRAPEVVEEQRSSDGTIKWAIAVGDQRVETVYIPEDDRATLCVSSQVGCALECKFCSTAQQGFNRNLRVSEIIGQVWRAAKIVGAAKVTGQRPITNVVMMGMGEPLLNLTNVVPAMEIMLDDFGFGLSKRRVTLSTSGVVPALDKLGDMIDVALAISLHAPNDTIRDEIVPINKKYNIETFLGAVRRYLEKSNANQGRVTIEYVMLDHVNDGTEHAHQLAELLKETPCKINLIPWNPFPGAPYGRSSNSRIDRFSKVLMSYGFTTIVRKTRGDDIDAACGQLAGDVIDRTKRTLRKRMQGEVIDIKAI.

Catalysis depends on Glu109, which acts as the Proton acceptor. The 240-residue stretch at Glu115–Asp354 folds into the Radical SAM core domain. Cys122 and Cys359 are oxidised to a cystine. Cys129, Cys133, and Cys136 together coordinate [4Fe-4S] cluster. S-adenosyl-L-methionine is bound by residues Gly183–Glu184, Ser215, Ser237–His239, and Asn316. Residue Cys359 is the S-methylcysteine intermediate of the active site.

This sequence belongs to the radical SAM superfamily. RlmN family. It depends on [4Fe-4S] cluster as a cofactor.

It is found in the cytoplasm. It catalyses the reaction adenosine(2503) in 23S rRNA + 2 reduced [2Fe-2S]-[ferredoxin] + 2 S-adenosyl-L-methionine = 2-methyladenosine(2503) in 23S rRNA + 5'-deoxyadenosine + L-methionine + 2 oxidized [2Fe-2S]-[ferredoxin] + S-adenosyl-L-homocysteine. The enzyme catalyses adenosine(37) in tRNA + 2 reduced [2Fe-2S]-[ferredoxin] + 2 S-adenosyl-L-methionine = 2-methyladenosine(37) in tRNA + 5'-deoxyadenosine + L-methionine + 2 oxidized [2Fe-2S]-[ferredoxin] + S-adenosyl-L-homocysteine. Functionally, specifically methylates position 2 of adenine 2503 in 23S rRNA and position 2 of adenine 37 in tRNAs. m2A2503 modification seems to play a crucial role in the proofreading step occurring at the peptidyl transferase center and thus would serve to optimize ribosomal fidelity. In Salmonella typhi, this protein is Dual-specificity RNA methyltransferase RlmN.